The following is a 314-amino-acid chain: Putative S-adenosyl-L-methionine-dependent methyltransferase MAB_3886c (314 aa).

Residues D133 and 162–163 (DL) each bind S-adenosyl-L-methionine.

This sequence belongs to the UPF0677 family.

Exhibits S-adenosyl-L-methionine-dependent methyltransferase activity. This chain is Putative S-adenosyl-L-methionine-dependent methyltransferase MAB_3886c, found in Mycobacteroides abscessus (strain ATCC 19977 / DSM 44196 / CCUG 20993 / CIP 104536 / JCM 13569 / NCTC 13031 / TMC 1543 / L948) (Mycobacterium abscessus).